We begin with the raw amino-acid sequence, 319 residues long: MQVTFLGTSSGVPTRARNVSAVALRLPQRSEMWLFDCGEGTQHQFLRSELRLSQLRRVFVTHMHGDHVFGLPGLLASLGLAGNSNEGVDLYGPDPLESYLNGVLRTSSTRIGYPLKVHRVHDCAENGTLVYEDDDLMVRCTPLTHRVPAYAYRVDQKPLAGRFDIAKAKDLQIPPGPIYAQLKRGDTVTLEDGRVIDGTTLCGPERPGVSVVYCTDTVFCEAAVDLAQGADLLIHESTFAHQESEMAYQKQHSTSTMAAQTAAEANVGQLVLTHLSPRYAPGNAVTPEDLLKEAQAIFPNTCLAKDFLTLEVKPRCNSL.

Residues His62, His64, Asp66, His67, His145, Asp216, and His274 each coordinate Zn(2+). Catalysis depends on Asp66, which acts as the Proton acceptor.

This sequence belongs to the RNase Z family. As to quaternary structure, homodimer. The cofactor is Zn(2+).

The catalysed reaction is Endonucleolytic cleavage of RNA, removing extra 3' nucleotides from tRNA precursor, generating 3' termini of tRNAs. A 3'-hydroxy group is left at the tRNA terminus and a 5'-phosphoryl group is left at the trailer molecule.. Zinc phosphodiesterase, which displays some tRNA 3'-processing endonuclease activity. Probably involved in tRNA maturation, by removing a 3'-trailer from precursor tRNA. In Synechococcus sp. (strain CC9902), this protein is Ribonuclease Z.